Reading from the N-terminus, the 257-residue chain is Snake venom serine protease salmonase (257 aa).

An N-terminal signal peptide occupies residues 1–18 (MVLIRVLVNFLILQLSYA). Residues 19 to 24 (QKSSEL) constitute a propeptide that is removed on maturation. Positions 25–248 (VIGGDECNIN…YIDWIQSIIA (224 aa)) constitute a Peptidase S1 domain. 5 disulfide bridges follow: C31/C162, C49/C65, C141/C209, C173/C188, and C199/C224. Catalysis depends on H64, which acts as the Charge relay system. The N-linked (GlcNAc...) asparagine glycan is linked to N78. The Charge relay system role is filled by D109. The active-site Charge relay system is the S203.

Belongs to the peptidase S1 family. Snake venom subfamily. Monomer. In terms of tissue distribution, expressed by the venom gland.

It localises to the secreted. In terms of biological role, snake venom serine protease that may act in the hemostasis system of the prey. In Gloydius brevicauda (Korean slamosa snake), this protein is Snake venom serine protease salmonase.